Consider the following 160-residue polypeptide: Phosphopantetheine adenylyltransferase (160 aa).

Substrate is bound at residue T11. Residues 11 to 12 (TF) and H19 contribute to the ATP site. K43, T75, and R89 together coordinate substrate. Residues 90–92 (GLR), E100, and 125–131 (YSFLSSS) contribute to the ATP site.

Belongs to the bacterial CoaD family. As to quaternary structure, homohexamer. It depends on Mg(2+) as a cofactor.

It is found in the cytoplasm. The catalysed reaction is (R)-4'-phosphopantetheine + ATP + H(+) = 3'-dephospho-CoA + diphosphate. Its pathway is cofactor biosynthesis; coenzyme A biosynthesis; CoA from (R)-pantothenate: step 4/5. Reversibly transfers an adenylyl group from ATP to 4'-phosphopantetheine, yielding dephospho-CoA (dPCoA) and pyrophosphate. In Listeria monocytogenes serotype 4b (strain CLIP80459), this protein is Phosphopantetheine adenylyltransferase.